The sequence spans 522 residues: MSNRVIIFDTTLRDGEQALAASLSVKEKLQIAMALERLGVDVMEVGFPVSSPGDFESVQTIARTIKNSRVCALSRALEKDIDAAAQALSVAEQFRIHTFISTSTIHVESKLKRSFEQVLEMAVGAVKYARRFTDDVEFSCEDAGRTPIDNLCRMVEAAIHAGARTINIPDTVGYTVPSEFGGIIQTLFNRVPNIDQAIISVHCHDDLGMSVANSITAVQHGARQIECTMNGIGERAGNCSLEEIAMILATRKNLLGVETGINAKEIHRTSNLVSQLCNMPIQSNKAIVGANAFTHSSGIHQDGMLKAQNTYEIMTPESIGLNRNNLNMTSRSGRHVIKHRMEEMGYSEQDYNLDALYEQFLHLADKKGQVFDYDLEALAFMEAQAAEDNFYQLQQLVVQSDSTEGVATATVRIDVGGEIKTEAATGNGPVDAAYNAIARATDRRIDIISYKLGAKGEGQNALGQVDITAVYHEQNFHGVGLATDVVEASARALVHVMNLTCRADKVADYKQNMHKNRELGGV.

The region spanning 5–267 (VIIFDTTLRD…ETGINAKEIH (263 aa)) is the Pyruvate carboxyltransferase domain. Residues Asp-14, His-202, His-204, and Asn-238 each contribute to the Mn(2+) site. Positions 392 to 522 (QLQQLVVQSD…MHKNRELGGV (131 aa)) are regulatory domain.

The protein belongs to the alpha-IPM synthase/homocitrate synthase family. LeuA type 1 subfamily. As to quaternary structure, homodimer. The cofactor is Mn(2+).

It localises to the cytoplasm. The enzyme catalyses 3-methyl-2-oxobutanoate + acetyl-CoA + H2O = (2S)-2-isopropylmalate + CoA + H(+). It participates in amino-acid biosynthesis; L-leucine biosynthesis; L-leucine from 3-methyl-2-oxobutanoate: step 1/4. Its function is as follows. Catalyzes the condensation of the acetyl group of acetyl-CoA with 3-methyl-2-oxobutanoate (2-ketoisovalerate) to form 3-carboxy-3-hydroxy-4-methylpentanoate (2-isopropylmalate). This chain is 2-isopropylmalate synthase, found in Shewanella sp. (strain MR-4).